A 240-amino-acid chain; its full sequence is tRNA pseudouridine synthase A (240 aa).

The active-site Nucleophile is the aspartate 50. Tyrosine 109 serves as a coordination point for substrate.

It belongs to the tRNA pseudouridine synthase TruA family. As to quaternary structure, homodimer.

It catalyses the reaction uridine(38/39/40) in tRNA = pseudouridine(38/39/40) in tRNA. Its function is as follows. Formation of pseudouridine at positions 38, 39 and 40 in the anticodon stem and loop of transfer RNAs. The chain is tRNA pseudouridine synthase A from Campylobacter jejuni (strain RM1221).